The primary structure comprises 450 residues: tRNA-2-methylthio-N(6)-dimethylallyladenosine synthase (450 aa).

An MTTase N-terminal domain is found at 8–128 (KRLYIKTYGC…LPELIARAHR (121 aa)). [4Fe-4S] cluster-binding residues include Cys-17, Cys-53, Cys-91, Cys-166, Cys-170, and Cys-173. The Radical SAM core domain occupies 152–382 (RPTGVTAFLT…QALLEQQQLA (231 aa)). One can recognise a TRAM domain in the interval 385–447 (AAQAGRVLPV…RNSLAGVLEL (63 aa)).

It belongs to the methylthiotransferase family. MiaB subfamily. In terms of assembly, monomer. [4Fe-4S] cluster is required as a cofactor.

It is found in the cytoplasm. It carries out the reaction N(6)-dimethylallyladenosine(37) in tRNA + (sulfur carrier)-SH + AH2 + 2 S-adenosyl-L-methionine = 2-methylsulfanyl-N(6)-dimethylallyladenosine(37) in tRNA + (sulfur carrier)-H + 5'-deoxyadenosine + L-methionine + A + S-adenosyl-L-homocysteine + 2 H(+). Its function is as follows. Catalyzes the methylthiolation of N6-(dimethylallyl)adenosine (i(6)A), leading to the formation of 2-methylthio-N6-(dimethylallyl)adenosine (ms(2)i(6)A) at position 37 in tRNAs that read codons beginning with uridine. This Phenylobacterium zucineum (strain HLK1) protein is tRNA-2-methylthio-N(6)-dimethylallyladenosine synthase.